Consider the following 207-residue polypeptide: Large ribosomal subunit protein uL3 (207 aa).

The protein belongs to the universal ribosomal protein uL3 family. Part of the 50S ribosomal subunit. Forms a cluster with proteins L14 and L19.

In terms of biological role, one of the primary rRNA binding proteins, it binds directly near the 3'-end of the 23S rRNA, where it nucleates assembly of the 50S subunit. The chain is Large ribosomal subunit protein uL3 from Desulforapulum autotrophicum (strain ATCC 43914 / DSM 3382 / VKM B-1955 / HRM2) (Desulfobacterium autotrophicum).